The following is a 565-amino-acid chain: Periplasmic trehalase (565 aa).

Residues 1–30 (MKSPAPSRPQKMALIPACIFLYFAALSVQA) form the signal peptide. Residues R152, 159–160 (WD), N196, 205–207 (RSQ), 277–279 (RPE), and G310 each bind substrate. Residues D312 and E496 each act as proton donor/acceptor in the active site. E511 lines the substrate pocket. The disordered stretch occupies residues 540-565 (DNVPATHPTVKSATTQPSTKEAQPTP). Residues 548–565 (TVKSATTQPSTKEAQPTP) are compositionally biased toward polar residues.

This sequence belongs to the glycosyl hydrolase 37 family. Monomer.

It localises to the periplasm. It catalyses the reaction alpha,alpha-trehalose + H2O = alpha-D-glucose + beta-D-glucose. Its function is as follows. Provides the cells with the ability to utilize trehalose at high osmolarity by splitting it into glucose molecules that can subsequently be taken up by the phosphotransferase-mediated uptake system. This is Periplasmic trehalase from Shigella flexneri serotype 5b (strain 8401).